Consider the following 368-residue polypeptide: mRNA export factor (368 aa).

A disordered region spans residues 15-34 (TSMFGSATTDNHNPMKDIEV). WD repeat units follow at residues 37-79 (SPDD…QTIP), 84-114 (MHTGPVLDVCWSDDGSKVFTASCDKTAKMWD), 125-157 (QHDAPVKTIHWIKAPNYSCVMTGSWDKTLKFWD), 168-206 (QLPERYYCADVIYPMAVVATAGRGLIVYQLENQPSEFRR), 215-255 (HRCV…KDNF), 271-301 (QDIYAVNGIAFHPVHGTLATVGSDGRFSFWD), and 310-346 (TSEQLDQPISACCFNHNGNIFAYASSYDWSKGHEFYN). T229 carries the phosphothreonine modification.

Belongs to the WD repeat rae1 family. As to quaternary structure, interacts with NUMA1 (via N-terminal end of the coiled-coil domain); this interaction promotes spindle formation in mitosis. Interacts with NUP98. Interacts with MYCBP2. Interacts with USP11.

The protein resides in the cytoplasm. The protein localises to the nucleus. Its subcellular location is the cytoskeleton. It localises to the spindle pole. In terms of biological role, plays a role in mitotic bipolar spindle formation. Binds mRNA. May function in nucleocytoplasmic transport and in directly or indirectly attaching cytoplasmic mRNPs to the cytoskeleton. The protein is mRNA export factor (RAE1) of Macaca fascicularis (Crab-eating macaque).